The sequence spans 138 residues: MLSPKRTKFRKAHKGRIHGTAKGNTQLNFGQFGLKALEPERITARQIESARRAITRQMKRAGRVWIRIFPDLPVSTKPAEVRMGSGKGAPEYWVARVQPGRIMFEIDGVAEGIAREALKLGAAKLPIKTKIVTRIGEA.

This sequence belongs to the universal ribosomal protein uL16 family. Part of the 50S ribosomal subunit.

In terms of biological role, binds 23S rRNA and is also seen to make contacts with the A and possibly P site tRNAs. This chain is Large ribosomal subunit protein uL16, found in Acidiphilium cryptum (strain JF-5).